The following is a 447-amino-acid chain: Alliin lyase (447 aa).

Residues 1–2 (QA) constitute a propeptide that is removed on maturation. In terms of domain architecture, EGF-like; atypical spans 15–61 (EAVANINCSGHGRAFLDGILSDGSPKCECNTCYTGADCSQKITGCSA). N-linked (GlcNAc...) asparagine glycosylation occurs at asparagine 21. Disulfide bonds link cysteine 22/cysteine 41, cysteine 43/cysteine 52, and cysteine 46/cysteine 59. 94–102 (YFFNPVSNF) serves as a coordination point for chloride. Residues asparagine 148 and asparagine 193 are each glycosylated (N-linked (GlcNAc...) asparagine). Lysine 253 carries the N6-(pyridoxal phosphate)lysine modification. N-linked (GlcNAc...) asparagine glycosylation occurs at asparagine 330. Cysteine 370 and cysteine 378 are oxidised to a cystine.

It belongs to the alliinase family. As to quaternary structure, homodimer. Pyridoxal 5'-phosphate is required as a cofactor.

It localises to the vacuole. The catalysed reaction is an S-alkyl-L-cysteine S-oxide = an S-alkyl sulfenate + 2-aminoprop-2-enoate. In Allium cepa var. aggregatum (Shallot), this protein is Alliin lyase.